A 484-amino-acid chain; its full sequence is tRNA sulfurtransferase (484 aa).

Positions 63–167 (EAFGERLACI…NDNLYLIDKR (105 aa)) constitute a THUMP domain. ATP is bound by residues 185–186 (LI), K267, G289, and Q298. C346 and C458 are disulfide-bonded. Residues 406 to 484 (INANEIIIDV…GYTNVKVYRP (79 aa)) form the Rhodanese domain. The Cysteine persulfide intermediate role is filled by C458.

Belongs to the ThiI family.

The protein localises to the cytoplasm. The enzyme catalyses [ThiI sulfur-carrier protein]-S-sulfanyl-L-cysteine + a uridine in tRNA + 2 reduced [2Fe-2S]-[ferredoxin] + ATP + H(+) = [ThiI sulfur-carrier protein]-L-cysteine + a 4-thiouridine in tRNA + 2 oxidized [2Fe-2S]-[ferredoxin] + AMP + diphosphate. It catalyses the reaction [ThiS sulfur-carrier protein]-C-terminal Gly-Gly-AMP + S-sulfanyl-L-cysteinyl-[cysteine desulfurase] + AH2 = [ThiS sulfur-carrier protein]-C-terminal-Gly-aminoethanethioate + L-cysteinyl-[cysteine desulfurase] + A + AMP + 2 H(+). It functions in the pathway cofactor biosynthesis; thiamine diphosphate biosynthesis. Catalyzes the ATP-dependent transfer of a sulfur to tRNA to produce 4-thiouridine in position 8 of tRNAs, which functions as a near-UV photosensor. Also catalyzes the transfer of sulfur to the sulfur carrier protein ThiS, forming ThiS-thiocarboxylate. This is a step in the synthesis of thiazole, in the thiamine biosynthesis pathway. The sulfur is donated as persulfide by IscS. This Shewanella halifaxensis (strain HAW-EB4) protein is tRNA sulfurtransferase.